The sequence spans 290 residues: 4-hydroxybenzoate octaprenyltransferase (290 aa).

A run of 6 helical transmembrane segments spans residues 38 to 58 (LAGM…GVFF), 99 to 119 (LFGA…SMTI), 141 to 161 (LPQL…FTAV), 213 to 233 (LIIG…GWQL), 238 to 258 (IYYL…KLIV), and 268 to 288 (AFLN…LSLL).

It belongs to the UbiA prenyltransferase family. It depends on Mg(2+) as a cofactor.

The protein resides in the cell inner membrane. It catalyses the reaction all-trans-octaprenyl diphosphate + 4-hydroxybenzoate = 4-hydroxy-3-(all-trans-octaprenyl)benzoate + diphosphate. It functions in the pathway cofactor biosynthesis; ubiquinone biosynthesis. Catalyzes the prenylation of para-hydroxybenzoate (PHB) with an all-trans polyprenyl group. Mediates the second step in the final reaction sequence of ubiquinone-8 (UQ-8) biosynthesis, which is the condensation of the polyisoprenoid side chain with PHB, generating the first membrane-bound Q intermediate 3-octaprenyl-4-hydroxybenzoate. This is 4-hydroxybenzoate octaprenyltransferase from Sodalis glossinidius (strain morsitans).